A 466-amino-acid polypeptide reads, in one-letter code: Adenosylhomocysteinase (466 aa).

The substrate site is built by Thr57, Asp132, and Glu192. 193 to 195 (TTT) contacts NAD(+). 2 residues coordinate substrate: Lys222 and Asp226. NAD(+) contacts are provided by residues Asn227, 256–261 (GYGDVG), Glu279, Asn314, 335–337 (IGH), and Asn380.

The protein belongs to the adenosylhomocysteinase family. NAD(+) is required as a cofactor.

It localises to the cytoplasm. It catalyses the reaction S-adenosyl-L-homocysteine + H2O = L-homocysteine + adenosine. It functions in the pathway amino-acid biosynthesis; L-homocysteine biosynthesis; L-homocysteine from S-adenosyl-L-homocysteine: step 1/1. May play a key role in the regulation of the intracellular concentration of adenosylhomocysteine. The sequence is that of Adenosylhomocysteinase from Rhizobium etli (strain CIAT 652).